The primary structure comprises 152 residues: SsrA-binding protein (152 aa).

The protein belongs to the SmpB family.

It localises to the cytoplasm. Required for rescue of stalled ribosomes mediated by trans-translation. Binds to transfer-messenger RNA (tmRNA), required for stable association of tmRNA with ribosomes. tmRNA and SmpB together mimic tRNA shape, replacing the anticodon stem-loop with SmpB. tmRNA is encoded by the ssrA gene; the 2 termini fold to resemble tRNA(Ala) and it encodes a 'tag peptide', a short internal open reading frame. During trans-translation Ala-aminoacylated tmRNA acts like a tRNA, entering the A-site of stalled ribosomes, displacing the stalled mRNA. The ribosome then switches to translate the ORF on the tmRNA; the nascent peptide is terminated with the 'tag peptide' encoded by the tmRNA and targeted for degradation. The ribosome is freed to recommence translation, which seems to be the essential function of trans-translation. This Rickettsia conorii (strain ATCC VR-613 / Malish 7) protein is SsrA-binding protein.